Reading from the N-terminus, the 681-residue chain is U3 small nucleolar ribonucleoprotein protein MPP10 (681 aa).

Residues Ser61, Ser120, and Ser140 each carry the phosphoserine modification. Residues 109–139 (ECEDEECEEDASEVEADNQENLETDLDEEQL) adopt a coiled-coil conformation. Residues 111-144 (EDEECEEDASEVEADNQENLETDLDEEQLSDEGG) show a composition bias toward acidic residues. Disordered stretches follow at residues 111–202 (EDEE…SVVD), 215–256 (LEKV…GRQK), and 268–365 (YKDF…EKRQ). A compositionally biased stretch (basic and acidic residues) spans 145–163 (DVPKGRDRAKSSRKSDPRK). Phosphoserine is present on residues Ser164, Ser168, and Ser172. Residues 215-227 (LEKVEKEEEKRPD) are compositionally biased toward basic and acidic residues. Composition is skewed to acidic residues over residues 228-248 (GEEEDEEDIDLFEDIDSDESE) and 273-322 (DPVE…EDEN). Phosphoserine occurs at positions 244, 247, 277, and 346. Positions 349–383 (AVKQESDEVKSSFEKRQEKMNEKIASLEKELLDKK) form a coiled coil. A Glycyl lysine isopeptide (Lys-Gly) (interchain with G-Cter in SUMO2) cross-link involves residue Lys351. The span at 352-365 (QESDEVKSSFEKRQ) shows a compositional bias: basic and acidic residues. Glycyl lysine isopeptide (Lys-Gly) (interchain with G-Cter in SUMO2) cross-links involve residues Lys383 and Lys395. Residues 471–491 (AEIYEQEYLKLNQQKTEEEDN) are a coiled coil. Residue Lys556 forms a Glycyl lysine isopeptide (Lys-Gly) (interchain with G-Cter in SUMO2) linkage. Residues 560-576 (KAGDLKTAAEKTATDKK) show a composition bias toward basic and acidic residues. The interval 560–644 (KAGDLKTAAE…RKDKPLKSSQ (85 aa)) is disordered. The stretch at 575 to 604 (KKRERRKKKYQKRLKIKEKEKRKKLLEKNN) forms a coiled coil. Over residues 577–599 (RERRKKKYQKRLKIKEKEKRKKL) the composition is skewed to basic residues. An N6-acetyllysine modification is found at Lys609. The span at 630-640 (LLKDERKDKPL) shows a compositional bias: basic and acidic residues. Residues Lys632 and Lys649 each participate in a glycyl lysine isopeptide (Lys-Gly) (interchain with G-Cter in SUMO2) cross-link. Positions 657–681 (QINDAKQPEKIKKKKQDISVHKLKL) are disordered. The span at 662 to 681 (KQPEKIKKKKQDISVHKLKL) shows a compositional bias: basic and acidic residues.

This sequence belongs to the MPP10 family. As to quaternary structure, part of the small subunit (SSU) processome, composed of more than 70 proteins and the RNA chaperone small nucleolar RNA (snoRNA) U3. Component of a heterotrimeric complex containing IMP3, IMP4 and MPHOSPH10. Interacts with IMP3 and IMP4. Phosphorylated in M (mitotic) phase.

It localises to the nucleus. The protein resides in the nucleolus. The protein localises to the chromosome. In terms of biological role, component of the 60-80S U3 small nucleolar ribonucleoprotein (U3 snoRNP). Required for the early cleavages during pre-18S ribosomal RNA processing. Part of the small subunit (SSU) processome, first precursor of the small eukaryotic ribosomal subunit. During the assembly of the SSU processome in the nucleolus, many ribosome biogenesis factors, an RNA chaperone and ribosomal proteins associate with the nascent pre-rRNA and work in concert to generate RNA folding, modifications, rearrangements and cleavage as well as targeted degradation of pre-ribosomal RNA by the RNA exosome. This Mus musculus (Mouse) protein is U3 small nucleolar ribonucleoprotein protein MPP10 (Mphosph10).